The following is a 290-amino-acid chain: 4-diphosphocytidyl-2-C-methyl-D-erythritol kinase (290 aa).

Lys-14 is a catalytic residue. Residue 103 to 113 (PMGGGLGGGSS) participates in ATP binding. Asp-145 is an active-site residue.

It belongs to the GHMP kinase family. IspE subfamily. In terms of assembly, homodimer.

It carries out the reaction 4-CDP-2-C-methyl-D-erythritol + ATP = 4-CDP-2-C-methyl-D-erythritol 2-phosphate + ADP + H(+). Its pathway is isoprenoid biosynthesis; isopentenyl diphosphate biosynthesis via DXP pathway; isopentenyl diphosphate from 1-deoxy-D-xylulose 5-phosphate: step 3/6. Catalyzes the phosphorylation of the position 2 hydroxy group of 4-diphosphocytidyl-2C-methyl-D-erythritol. The protein is 4-diphosphocytidyl-2-C-methyl-D-erythritol kinase of Pectobacterium atrosepticum (strain SCRI 1043 / ATCC BAA-672) (Erwinia carotovora subsp. atroseptica).